We begin with the raw amino-acid sequence, 450 residues long: 23S rRNA (uracil(1939)-C(5))-methyltransferase RlmD (450 aa).

Positions methionine 1–proline 22 are disordered. A TRAM domain is found at alanine 20 to arginine 78. Residues cysteine 91, cysteine 97, cysteine 100, and cysteine 179 each coordinate [4Fe-4S] cluster. S-adenosyl-L-methionine contacts are provided by glutamine 283, phenylalanine 312, asparagine 317, glutamate 333, aspartate 360, and aspartate 381. The active-site Nucleophile is the cysteine 407.

Belongs to the class I-like SAM-binding methyltransferase superfamily. RNA M5U methyltransferase family. RlmD subfamily.

The enzyme catalyses uridine(1939) in 23S rRNA + S-adenosyl-L-methionine = 5-methyluridine(1939) in 23S rRNA + S-adenosyl-L-homocysteine + H(+). Functionally, catalyzes the formation of 5-methyl-uridine at position 1939 (m5U1939) in 23S rRNA. The sequence is that of 23S rRNA (uracil(1939)-C(5))-methyltransferase RlmD from Pseudomonas aeruginosa (strain UCBPP-PA14).